The sequence spans 645 residues: Dictomallein-like protein (645 aa).

A signal peptide spans 1–13; that stretch reads MKLSMVMVLLVLA. The disordered stretch occupies residues 19-55; sequence CGGNDDNNSERTHESGDSNGDVTTPDNDASSNDEDDA. The Peptidase M66 domain occupies 177–448; sequence PALHPELDLT…QRWVRNRARM (272 aa). H333 serves as a coordination point for Zn(2+). E334 is a catalytic residue. Residues H337 and H343 each contribute to the Zn(2+) site.

This sequence belongs to the dictomallein family. Requires Zn(2+) as cofactor.

Its subcellular location is the secreted. This is Dictomallein-like protein (dtmL) from Hahella chejuensis (strain KCTC 2396).